A 244-amino-acid chain; its full sequence is L-xylulose reductase (244 aa).

N-acetylmethionine is present on Met1. 11–39 (LVTGAGKGIGRSIVKALHAAGARVVAVSR) is a binding site for NADP(+). Arg21 bears the Omega-N-methylarginine mark. Ser46 is subject to Phosphoserine. Ser136 contacts substrate. The active-site Proton acceptor is Tyr149. Lys153 is a catalytic residue.

It belongs to the short-chain dehydrogenases/reductases (SDR) family. Homotetramer.

It localises to the membrane. The enzyme catalyses xylitol + NADP(+) = L-xylulose + NADPH + H(+). Catalyzes the NADPH-dependent reduction of several pentoses, tetroses, trioses, alpha-dicarbonyl compounds and L-xylulose. Participates in the uronate cycle of glucose metabolism. May play a role in the water absorption and cellular osmoregulation in the proximal renal tubules by producing xylitol, an osmolyte, thereby preventing osmolytic stress from occurring in the renal tubules. The polypeptide is L-xylulose reductase (DCXR) (Bos taurus (Bovine)).